Reading from the N-terminus, the 384-residue chain is Glucose-fructose oxidoreductase domain-containing protein 2 (384 aa).

A signal peptide spans 1 to 25; that stretch reads MMTLPGIGVFGTGNTARVLIQLLRA. Positions 358-384 are disordered; the sequence is GEWESVELTNEETDSNQNLSEVIQHNL. The segment covering 372–384 has biased composition (polar residues); sequence SNQNLSEVIQHNL.

The protein belongs to the Gfo/Idh/MocA family.

It localises to the secreted. It is found in the extracellular space. The protein resides in the extracellular matrix. Its function is as follows. Promotes matrix assembly. This chain is Glucose-fructose oxidoreductase domain-containing protein 2 (gfod2), found in Xenopus laevis (African clawed frog).